Here is a 344-residue protein sequence, read N- to C-terminus: Anthranilate phosphoribosyltransferase (344 aa).

Residues Gly-83, 86-87 (GD), Thr-91, 93-96 (NIST), 111-119 (KHGGRSVSS), and Ser-123 each bind 5-phospho-alpha-D-ribose 1-diphosphate. Residue Gly-83 participates in anthranilate binding. A Mg(2+)-binding site is contributed by Ser-95. Residue Arg-169 participates in anthranilate binding. Mg(2+) contacts are provided by Asp-228 and Glu-229.

Belongs to the anthranilate phosphoribosyltransferase family. In terms of assembly, homodimer. Requires Mg(2+) as cofactor.

The enzyme catalyses N-(5-phospho-beta-D-ribosyl)anthranilate + diphosphate = 5-phospho-alpha-D-ribose 1-diphosphate + anthranilate. It functions in the pathway amino-acid biosynthesis; L-tryptophan biosynthesis; L-tryptophan from chorismate: step 2/5. Functionally, catalyzes the transfer of the phosphoribosyl group of 5-phosphorylribose-1-pyrophosphate (PRPP) to anthranilate to yield N-(5'-phosphoribosyl)-anthranilate (PRA). The polypeptide is Anthranilate phosphoribosyltransferase (Methylibium petroleiphilum (strain ATCC BAA-1232 / LMG 22953 / PM1)).